Here is a 410-residue protein sequence, read N- to C-terminus: D-3-phosphoglycerate dehydrogenase (410 aa).

NAD(+) contacts are provided by residues 162–163, D182, 239–241, and D265; these read HI and AAR. R241 is a catalytic residue. Residue E270 is part of the active site. H293 (proton donor) is an active-site residue. 293-296 contributes to the NAD(+) binding site; that stretch reads HIGG. Residues 341 to 410 enclose the ACT domain; that stretch reads RLLHIHENRP…DGTIRARVLY (70 aa).

Belongs to the D-isomer specific 2-hydroxyacid dehydrogenase family.

It carries out the reaction (2R)-3-phosphoglycerate + NAD(+) = 3-phosphooxypyruvate + NADH + H(+). It catalyses the reaction (R)-2-hydroxyglutarate + NAD(+) = 2-oxoglutarate + NADH + H(+). It functions in the pathway amino-acid biosynthesis; L-serine biosynthesis; L-serine from 3-phospho-D-glycerate: step 1/3. Its activity is regulated as follows. In bacteria displays feedback inhibition by L-serine. Its function is as follows. Catalyzes the reversible oxidation of 3-phospho-D-glycerate to 3-phosphonooxypyruvate, the first step of the phosphorylated L-serine biosynthesis pathway. Also catalyzes the reversible oxidation of 2-hydroxyglutarate to 2-oxoglutarate. The chain is D-3-phosphoglycerate dehydrogenase (serA) from Haemophilus influenzae (strain ATCC 51907 / DSM 11121 / KW20 / Rd).